Reading from the N-terminus, the 485-residue chain is tRNA sulfurtransferase (485 aa).

Residues 61-165 (EELIALLQRI…DDKMMLVKTR (105 aa)) enclose the THUMP domain. ATP contacts are provided by residues 183–184 (LI), Lys265, Gly287, and Gln296. Residues Cys344 and Cys456 are joined by a disulfide bond. The 80-residue stretch at 404 to 483 (LGENEVILDI…FSNVRVFAKN (80 aa)) folds into the Rhodanese domain. Cys456 functions as the Cysteine persulfide intermediate in the catalytic mechanism.

Belongs to the ThiI family.

The protein localises to the cytoplasm. It catalyses the reaction [ThiI sulfur-carrier protein]-S-sulfanyl-L-cysteine + a uridine in tRNA + 2 reduced [2Fe-2S]-[ferredoxin] + ATP + H(+) = [ThiI sulfur-carrier protein]-L-cysteine + a 4-thiouridine in tRNA + 2 oxidized [2Fe-2S]-[ferredoxin] + AMP + diphosphate. The enzyme catalyses [ThiS sulfur-carrier protein]-C-terminal Gly-Gly-AMP + S-sulfanyl-L-cysteinyl-[cysteine desulfurase] + AH2 = [ThiS sulfur-carrier protein]-C-terminal-Gly-aminoethanethioate + L-cysteinyl-[cysteine desulfurase] + A + AMP + 2 H(+). It functions in the pathway cofactor biosynthesis; thiamine diphosphate biosynthesis. In terms of biological role, catalyzes the ATP-dependent transfer of a sulfur to tRNA to produce 4-thiouridine in position 8 of tRNAs, which functions as a near-UV photosensor. Also catalyzes the transfer of sulfur to the sulfur carrier protein ThiS, forming ThiS-thiocarboxylate. This is a step in the synthesis of thiazole, in the thiamine biosynthesis pathway. The sulfur is donated as persulfide by IscS. This Haemophilus influenzae (strain 86-028NP) protein is tRNA sulfurtransferase.